A 986-amino-acid chain; its full sequence is Ephrin type-A receptor 4 (986 aa).

The signal sequence occupies residues 1–19 (MAGIFYFILFSFLFGICDA). Residues 20 to 547 (VTGSRVYPAN…RIIGDGANST (528 aa)) lie on the Extracellular side of the membrane. Residues 30–209 (EVTLLDSRSV…FYKKCPLTVR (180 aa)) form the Eph LBD domain. N-linked (GlcNAc...) asparagine glycans are attached at residues Asn235, Asn340, and Asn408. Fibronectin type-III domains follow at residues 328–439 (PPSA…TNQA) and 440–537 (APSS…TVPS). Residues 548–569 (VLLVSVSGSVVLVVILIAAFVI) traverse the membrane as a helical segment. The Cytoplasmic segment spans residues 570 to 986 (SRRRSKYSKA…QQMHGRMVPV (417 aa)). Phosphotyrosine; by autocatalysis occurs at positions 596 and 602. The 262-residue stretch at 621–882 (IKIEKVIGVG…QIVNMLDKLI (262 aa)) folds into the Protein kinase domain. ATP is bound by residues 627–635 (IGVGEFGEV) and Lys653. Asp746 (proton acceptor) is an active-site residue. A phosphotyrosine; by autocatalysis mark is found at Tyr779 and Tyr928. Residues 911 to 975 (SAVVSVGDWL…LSSVQAMRTQ (65 aa)) enclose the SAM domain. The PDZ-binding motif lies at 984-986 (VPV).

Belongs to the protein kinase superfamily. Tyr protein kinase family. Ephrin receptor subfamily. Heterotetramer upon binding of the ligand. The heterotetramer is composed of an ephrin dimer and a receptor dimer. Oligomerization is probably required to induce biological responses. Interacts (phosphorylated at position Tyr-602) with FYN. Interacts (via PDZ motif) with SIPA1L1 (via PDZ domain); controls neuronal morphology through regulation of the RAP1 (RAP1A or RAP1B) and RAP2 (RAP2A, RAP2B or RAP2C) GTPases. Interacts with CDK5, CDK5R1 and NGEF; upon activation by EFNA1 induces NGEF phosphorylation by the kinase CDK5. Interacts with CHN1; effector of EPHA4 in axon guidance linking EPHA4 activation to RAC1 regulation. Forms a ternary complex composed of ADAM10, CADH1 and EPHA4; within the complex, CADH1 is cleaved by ADAM10 which disrupts adherens junctions. In terms of tissue distribution, expressed in inner and outer pillar cells of the organ of Corti (at protein level). Highest expression in the adult brain and retina and also detectable in kidney, lung, skeletal muscle and thymus. Not detected in heart and liver. Expressed in myogenic progenitor cells.

Its subcellular location is the cell membrane. The protein resides in the cell projection. The protein localises to the axon. It is found in the dendrite. It localises to the postsynaptic density membrane. Its subcellular location is the early endosome. The protein resides in the cell junction. The protein localises to the adherens junction. It catalyses the reaction L-tyrosyl-[protein] + ATP = O-phospho-L-tyrosyl-[protein] + ADP + H(+). In terms of biological role, receptor tyrosine kinase which binds membrane-bound ephrin family ligands residing on adjacent cells, leading to contact-dependent bidirectional signaling into neighboring cells. The signaling pathway downstream of the receptor is referred to as forward signaling while the signaling pathway downstream of the ephrin ligand is referred to as reverse signaling. Highly promiscuous, it has the unique property among Eph receptors to bind and to be physiologically activated by both GPI-anchored ephrin-A and transmembrane ephrin-B ligands including EFNA1 and EFNB3. Upon activation by ephrin ligands, modulates cell morphology and integrin-dependent cell adhesion through regulation of the Rac, Rap and Rho GTPases activity. Plays an important role in the development of the nervous system controlling different steps of axonal guidance including the establishment of the corticospinal projections. May also control the segregation of motor and sensory axons during neuromuscular circuit developmen. In addition to its role in axonal guidance plays a role in synaptic plasticity. Activated by EFNA1 phosphorylates CDK5 at 'Tyr-15' which in turn phosphorylates NGEF regulating RHOA and dendritic spine morphogenesis. In the nervous system, also plays a role in repair after injury preventing axonal regeneration and in angiogenesis playing a role in central nervous system vascular formation. Additionally, its promiscuity makes it available to participate in a variety of cell-cell signaling regulating for instance the development of the thymic epithelium. During development of the cochlear organ of Corti, regulates pillar cell separation by forming a ternary complex with ADAM10 and CADH1 which facilitates the cleavage of CADH1 by ADAM10 and disruption of adherens junctions. Phosphorylates CAPRIN1, promoting CAPRIN1-dependent formation of a membraneless compartment. This Mus musculus (Mouse) protein is Ephrin type-A receptor 4 (Epha4).